A 359-amino-acid polypeptide reads, in one-letter code: Protein-L-isoaspartate O-methyltransferase domain-containing protein 2 (359 aa).

G2 carries the N-myristoyl glycine lipid modification. S64 is a catalytic residue. AdoMet binding motif regions lie at residues 85–94 (LNLGSGTGYL), 160–164 (YDRVY), and 181–191 (LKVGGILVMPL). Residues 240–250 (VRSLQDLARLA) are BC-box. A disordered region spans residues 301 to 328 (SNPSDDTSCEDAEEDRREVAERTLQETK). Positions 314-328 (EDRREVAERTLQETK) are enriched in basic and acidic residues. The CUL-box stretch occupies residues 343 to 346 (LPLP).

The protein belongs to the methyltransferase superfamily. L-isoaspartyl/D-aspartyl protein methyltransferase family.

Its subcellular location is the cytoplasm. Its function is as follows. May act as a substrate recognition component of an ECS (Elongin BC-CUL5-SOCS-box protein) E3 ubiquitin ligase complex which mediates the ubiquitination and subsequent proteasomal degradation of target proteins. May bind to the methyltransferase cofactor S-adenosylmethionine (AdoMet) via the N-terminal AdoMet binding motif, but probably does not display methyltransferase activity. This is Protein-L-isoaspartate O-methyltransferase domain-containing protein 2 (Pcmtd2) from Mus musculus (Mouse).